Consider the following 207-residue polypeptide: Ribonuclease HII (207 aa).

Residues 5–207 (PLIIGVDEAG…APVRALLRPC (203 aa)) enclose the RNase H type-2 domain. A divalent metal cation is bound by residues Asp-11, Glu-12, and Asp-117.

Belongs to the RNase HII family. Mn(2+) serves as cofactor. Requires Mg(2+) as cofactor.

Its subcellular location is the cytoplasm. The enzyme catalyses Endonucleolytic cleavage to 5'-phosphomonoester.. In terms of biological role, endonuclease that specifically degrades the RNA of RNA-DNA hybrids. The chain is Ribonuclease HII from Hyphomonas neptunium (strain ATCC 15444).